A 312-amino-acid polypeptide reads, in one-letter code: Fe-S cluster assembly protein DRE2 (312 aa).

An N-terminal SAM-like domain region spans residues 7–139 (LSDVPRVLLL…VKPVFEEQSV (133 aa)). The interval 140–204 (LLPFSINRSQ…EDELINEDEL (65 aa)) is linker. Positions 214, 225, 228, and 230 each coordinate [2Fe-2S] cluster. The segment at 214–230 (CRPKAGKRRRACKDCTC) is fe-S binding site A. Positions 275, 278, 286, and 289 each coordinate [4Fe-4S] cluster. 2 consecutive short sequence motifs (cx2C motif) follow at residues 275–278 (CGNC) and 286–289 (CDGC). A fe-S binding site B region spans residues 275–289 (CGNCSLGDAFRCDGC).

Belongs to the anamorsin family. Monomer. Interacts with TAH18. Interacts with MIA40. [2Fe-2S] cluster serves as cofactor. It depends on [4Fe-4S] cluster as a cofactor.

It is found in the cytoplasm. It localises to the mitochondrion intermembrane space. Its function is as follows. Component of the cytosolic iron-sulfur (Fe-S) protein assembly (CIA) machinery required for the maturation of extramitochondrial Fe-S proteins. Part of an electron transfer chain functioning in an early step of cytosolic Fe-S biogenesis, facilitating the de novo assembly of a [4Fe-4S] cluster on the scaffold complex CFD1-NBP35. Electrons are transferred to DRE2 from NADPH via the FAD- and FMN-containing protein TAH18. TAH18-DRE2 are also required for the assembly of the diferric tyrosyl radical cofactor of ribonucleotide reductase (RNR), probably by providing electrons for reduction during radical cofactor maturation in the catalytic small subunit RNR2. This chain is Fe-S cluster assembly protein DRE2, found in Arthroderma otae (strain ATCC MYA-4605 / CBS 113480) (Microsporum canis).